An 88-amino-acid chain; its full sequence is UPF0297 protein GTNG_2488 (88 aa).

This sequence belongs to the UPF0297 family.

The protein is UPF0297 protein GTNG_2488 of Geobacillus thermodenitrificans (strain NG80-2).